The chain runs to 309 residues: 4-hydroxy-3-methylbut-2-enyl diphosphate reductase (309 aa).

A [4Fe-4S] cluster-binding site is contributed by C12. Residues H41 and H74 each contribute to the (2E)-4-hydroxy-3-methylbut-2-enyl diphosphate site. Dimethylallyl diphosphate is bound by residues H41 and H74. Residues H41 and H74 each coordinate isopentenyl diphosphate. Residue C96 participates in [4Fe-4S] cluster binding. Position 124 (H124) interacts with (2E)-4-hydroxy-3-methylbut-2-enyl diphosphate. H124 serves as a coordination point for dimethylallyl diphosphate. H124 provides a ligand contact to isopentenyl diphosphate. E126 functions as the Proton donor in the catalytic mechanism. T167 serves as a coordination point for (2E)-4-hydroxy-3-methylbut-2-enyl diphosphate. C197 provides a ligand contact to [4Fe-4S] cluster. The (2E)-4-hydroxy-3-methylbut-2-enyl diphosphate site is built by S225, S226, N227, and S269. Dimethylallyl diphosphate is bound by residues S225, S226, N227, and S269. Positions 225, 226, 227, and 269 each coordinate isopentenyl diphosphate.

This sequence belongs to the IspH family. Requires [4Fe-4S] cluster as cofactor.

The catalysed reaction is isopentenyl diphosphate + 2 oxidized [2Fe-2S]-[ferredoxin] + H2O = (2E)-4-hydroxy-3-methylbut-2-enyl diphosphate + 2 reduced [2Fe-2S]-[ferredoxin] + 2 H(+). The enzyme catalyses dimethylallyl diphosphate + 2 oxidized [2Fe-2S]-[ferredoxin] + H2O = (2E)-4-hydroxy-3-methylbut-2-enyl diphosphate + 2 reduced [2Fe-2S]-[ferredoxin] + 2 H(+). It participates in isoprenoid biosynthesis; dimethylallyl diphosphate biosynthesis; dimethylallyl diphosphate from (2E)-4-hydroxy-3-methylbutenyl diphosphate: step 1/1. Its pathway is isoprenoid biosynthesis; isopentenyl diphosphate biosynthesis via DXP pathway; isopentenyl diphosphate from 1-deoxy-D-xylulose 5-phosphate: step 6/6. In terms of biological role, catalyzes the conversion of 1-hydroxy-2-methyl-2-(E)-butenyl 4-diphosphate (HMBPP) into a mixture of isopentenyl diphosphate (IPP) and dimethylallyl diphosphate (DMAPP). Acts in the terminal step of the DOXP/MEP pathway for isoprenoid precursor biosynthesis. This is 4-hydroxy-3-methylbut-2-enyl diphosphate reductase from Shewanella pealeana (strain ATCC 700345 / ANG-SQ1).